We begin with the raw amino-acid sequence, 526 residues long: MFS-type transporter clz19 (526 aa).

Residues 1-49 (MNVDTTSPQAPLAGVESKQDGASNEATAKAESTTHDQNESSSFDERPVH) are disordered. Basic and acidic residues predominate over residues 32 to 49 (STTHDQNESSSFDERPVH). Asn-38 is a glycosylation site (N-linked (GlcNAc...) asparagine). The helical transmembrane segment at 59-79 (ALLAVASFAAAISPASTTTYY) threads the bilayer. A glycan (N-linked (GlcNAc...) asparagine) is linked at Asn-97. Transmembrane regions (helical) follow at residues 126–143 (VYLVSLSINMAANLGLAL), 186–206 (AYLTLGLVMGPALGPLIGGLL), and 214–234 (AIFWFLMILGGFFFLMVLTFF). Asn-238 and Asn-253 each carry an N-linked (GlcNAc...) asparagine glycan. 6 helical membrane passes run 294–314 (FIVCMYGALLFGGYASVISIF), 322–342 (YGYSQVQVGLCYLPFGVGSIL), 384–404 (LTVSFPMIFATCGFVVAYGWL), 411–431 (VASVLVVVFLIANVFTGVLIA), 446–466 (ALGAAMNLTRCLMGAGGVAAV), and 473–493 (IGIGYTATATAGVWVVTLPAL).

The protein belongs to the major facilitator superfamily.

It localises to the membrane. Its function is as follows. MFS-type transporter; part of the gene cluster that mediates the biosynthesis of squalestatin S1 (SQS1, also known as zaragozic acid A), a heavily oxidized fungal polyketide that offers potent cholesterol lowering activity by targeting squalene synthase (SS). In Cochliobolus lunatus (Filamentous fungus), this protein is MFS-type transporter clz19.